Reading from the N-terminus, the 403-residue chain is Photosystem II stability/assembly factor HCF136, chloroplastic (403 aa).

A chloroplast-targeting transit peptide spans 1–53 (MASLQLCDGYLLFKPSVSPRFLSQRISHRLIPKASSSPPPSPSPSSSSSSLSF). Residues 31-50 (IPKASSSPPPSPSPSSSSSS) form a disordered region. A thylakoid-targeting transit peptide spans 54-78 (SRRELLYQSAAVSLSLSSIVGPARA).

This sequence belongs to the Ycf48 family. Interacts with PAM68. Expression in green tissue, not roots.

Its subcellular location is the plastid. It localises to the chloroplast thylakoid lumen. Functionally, essential for photosystem II (PSII) biogenesis; required for assembly of an early intermediate in PSII assembly that includes D2 (psbD) and cytochrome b559. Has been suggested to be required for chlorophyll a binding. This is Photosystem II stability/assembly factor HCF136, chloroplastic (HCF136) from Arabidopsis thaliana (Mouse-ear cress).